The following is a 118-amino-acid chain: ATP synthase subunit g, mitochondrial (118 aa).

As to quaternary structure, F-type ATP synthases have 2 components, the catalytic core F(1) and the membrane-embedded component F(0), linked together by a central stalk and a peripheral stalk. The central stalk, also called rotor shaft, is often seen as part of F(1). The peripheral stalk is seen as part of F(0). F(0) contains the membrane channel next to the rotor. F-type ATP synthases form dimers but each monomer functions independently in ATP generation. The dimer consists of 18 different polypeptides: ATP1 (subunit alpha, part of F(1), 3 molecules per monomer), ATP2 (subunit beta, part of F(1), 3 molecules per monomer), ATP3 (subunit gamma, part of the central stalk), ATP4 (subunit b, part of the peripheral stalk), ATP5/OSCP (subunit 5/OSCP, part of the peripheral stalk), ATP6 (subunit a, part of the peripheral stalk), ATP7 (subunit d, part of the peripheral stalk), ATP8 (subunit 8, part of the peripheral stalk), OLI1 (subunit c, part of the rotor, 10 molecules per monomer), ATP14 (subunit h, part of the peripheral stalk), ATP15 (subunit epsilon, part of the central stalk), ATP16 (subunit delta, part of the central stalk), ATP17 (subunit f, part of the peripheral stalk), ATP18 (subunit i/j, part of the peripheral stalk). Dimer-specific subunits are ATP19 (subunit k, at interface between monomers), ATP20 (subunit g, at interface between monomers), TIM11 (subunit e, at interface between monomers). Also contains subunit L.

It is found in the mitochondrion inner membrane. Mitochondrial membrane ATP synthase (F(1)F(0) ATP synthase or Complex V) produces ATP from ADP in the presence of a proton gradient across the membrane which is generated by electron transport complexes of the respiratory chain. F-type ATP synthases consist of two structural domains, F(1) - containing the extramembraneous catalytic core, and F(0) - containing the membrane proton channel, linked together by a central stalk and a peripheral stalk. During catalysis, ATP synthesis in the catalytic domain of F(1) is coupled via a rotary mechanism of the central stalk subunits to proton translocation. Part of the complex F(0) domain Minor subunit located with subunit a/ATP6 in the membrane. Together with subunit e/TIM11, probably contributes to membrane curvature at the site of the ATP synthase dimer, ultimately contributing to formation of cristae. This Pichia angusta (Yeast) protein is ATP synthase subunit g, mitochondrial.